Reading from the N-terminus, the 116-residue chain is Ribonuclease P protein component (116 aa).

It belongs to the RnpA family. Consists of a catalytic RNA component (M1 or rnpB) and a protein subunit.

It catalyses the reaction Endonucleolytic cleavage of RNA, removing 5'-extranucleotides from tRNA precursor.. In terms of biological role, RNaseP catalyzes the removal of the 5'-leader sequence from pre-tRNA to produce the mature 5'-terminus. It can also cleave other RNA substrates such as 4.5S RNA. The protein component plays an auxiliary but essential role in vivo by binding to the 5'-leader sequence and broadening the substrate specificity of the ribozyme. This Geobacillus sp. (strain WCH70) protein is Ribonuclease P protein component.